The sequence spans 142 residues: uncharacterized protein (142 aa).

This is an uncharacterized protein from Invertebrate iridescent virus 3 (IIV-3).